The sequence spans 206 residues: Urease accessory protein UreG (206 aa).

14–21 contacts GTP; that stretch reads GPVGSGKT.

Belongs to the SIMIBI class G3E GTPase family. UreG subfamily. Homodimer. UreD, UreF and UreG form a complex that acts as a GTP-hydrolysis-dependent molecular chaperone, activating the urease apoprotein by helping to assemble the nickel containing metallocenter of UreC. The UreE protein probably delivers the nickel.

The protein localises to the cytoplasm. Functionally, facilitates the functional incorporation of the urease nickel metallocenter. This process requires GTP hydrolysis, probably effectuated by UreG. This is Urease accessory protein UreG from Aliivibrio fischeri (strain ATCC 700601 / ES114) (Vibrio fischeri).